A 267-amino-acid chain; its full sequence is Diaminopimelate epimerase (267 aa).

Asn-15 and Asn-66 together coordinate substrate. Cys-75 serves as the catalytic Proton donor. Substrate-binding positions include 76–77 (GN), Asn-150, Asn-183, and 201–202 (ER). Cys-210 serves as the catalytic Proton acceptor. Substrate is bound at residue 211–212 (GT).

The protein belongs to the diaminopimelate epimerase family. As to quaternary structure, homodimer.

Its subcellular location is the cytoplasm. It carries out the reaction (2S,6S)-2,6-diaminopimelate = meso-2,6-diaminopimelate. Its pathway is amino-acid biosynthesis; L-lysine biosynthesis via DAP pathway; DL-2,6-diaminopimelate from LL-2,6-diaminopimelate: step 1/1. In terms of biological role, catalyzes the stereoinversion of LL-2,6-diaminopimelate (L,L-DAP) to meso-diaminopimelate (meso-DAP), a precursor of L-lysine and an essential component of the bacterial peptidoglycan. This Bacteroides thetaiotaomicron (strain ATCC 29148 / DSM 2079 / JCM 5827 / CCUG 10774 / NCTC 10582 / VPI-5482 / E50) protein is Diaminopimelate epimerase.